Reading from the N-terminus, the 387-residue chain is UDP-N-acetylglucosamine--N-acetylmuramyl-(pentapeptide) pyrophosphoryl-undecaprenol N-acetylglucosamine transferase (387 aa).

Residues 26–28 (TGG), asparagine 137, arginine 177, serine 205, and glutamine 306 contribute to the UDP-N-acetyl-alpha-D-glucosamine site.

Belongs to the glycosyltransferase 28 family. MurG subfamily.

The protein localises to the cell inner membrane. It catalyses the reaction di-trans,octa-cis-undecaprenyl diphospho-N-acetyl-alpha-D-muramoyl-L-alanyl-D-glutamyl-meso-2,6-diaminopimeloyl-D-alanyl-D-alanine + UDP-N-acetyl-alpha-D-glucosamine = di-trans,octa-cis-undecaprenyl diphospho-[N-acetyl-alpha-D-glucosaminyl-(1-&gt;4)]-N-acetyl-alpha-D-muramoyl-L-alanyl-D-glutamyl-meso-2,6-diaminopimeloyl-D-alanyl-D-alanine + UDP + H(+). It functions in the pathway cell wall biogenesis; peptidoglycan biosynthesis. Cell wall formation. Catalyzes the transfer of a GlcNAc subunit on undecaprenyl-pyrophosphoryl-MurNAc-pentapeptide (lipid intermediate I) to form undecaprenyl-pyrophosphoryl-MurNAc-(pentapeptide)GlcNAc (lipid intermediate II). This Rhodospirillum rubrum (strain ATCC 11170 / ATH 1.1.1 / DSM 467 / LMG 4362 / NCIMB 8255 / S1) protein is UDP-N-acetylglucosamine--N-acetylmuramyl-(pentapeptide) pyrophosphoryl-undecaprenol N-acetylglucosamine transferase.